The sequence spans 158 residues: Small ribosomal subunit protein uS7 (158 aa).

It belongs to the universal ribosomal protein uS7 family. In terms of assembly, part of the 30S ribosomal subunit. Contacts proteins S9 and S11.

Its function is as follows. One of the primary rRNA binding proteins, it binds directly to 16S rRNA where it nucleates assembly of the head domain of the 30S subunit. Is located at the subunit interface close to the decoding center, probably blocks exit of the E-site tRNA. The polypeptide is Small ribosomal subunit protein uS7 (Phocaeicola vulgatus (strain ATCC 8482 / DSM 1447 / JCM 5826 / CCUG 4940 / NBRC 14291 / NCTC 11154) (Bacteroides vulgatus)).